We begin with the raw amino-acid sequence, 72 residues long: Translation initiation factor IF-1 (72 aa).

The S1-like domain maps to 1-72 (MAKEELLEMR…TKGRITYRFK (72 aa)).

This sequence belongs to the IF-1 family. Component of the 30S ribosomal translation pre-initiation complex which assembles on the 30S ribosome in the order IF-2 and IF-3, IF-1 and N-formylmethionyl-tRNA(fMet); mRNA recruitment can occur at any time during PIC assembly.

It is found in the cytoplasm. Its function is as follows. One of the essential components for the initiation of protein synthesis. Stabilizes the binding of IF-2 and IF-3 on the 30S subunit to which N-formylmethionyl-tRNA(fMet) subsequently binds. Helps modulate mRNA selection, yielding the 30S pre-initiation complex (PIC). Upon addition of the 50S ribosomal subunit IF-1, IF-2 and IF-3 are released leaving the mature 70S translation initiation complex. This Sphingopyxis alaskensis (strain DSM 13593 / LMG 18877 / RB2256) (Sphingomonas alaskensis) protein is Translation initiation factor IF-1.